The primary structure comprises 155 residues: Small ribosomal subunit protein uS7 (155 aa).

Belongs to the universal ribosomal protein uS7 family. Part of the 30S ribosomal subunit. Contacts proteins S9 and S11.

Its function is as follows. One of the primary rRNA binding proteins, it binds directly to 16S rRNA where it nucleates assembly of the head domain of the 30S subunit. Is located at the subunit interface close to the decoding center, probably blocks exit of the E-site tRNA. The sequence is that of Small ribosomal subunit protein uS7 from Corynebacterium glutamicum (strain R).